The chain runs to 257 residues: Imidazole glycerol phosphate synthase subunit HisF (257 aa).

Active-site residues include D11 and D130.

The protein belongs to the HisA/HisF family. As to quaternary structure, heterodimer of HisH and HisF.

It is found in the cytoplasm. The enzyme catalyses 5-[(5-phospho-1-deoxy-D-ribulos-1-ylimino)methylamino]-1-(5-phospho-beta-D-ribosyl)imidazole-4-carboxamide + L-glutamine = D-erythro-1-(imidazol-4-yl)glycerol 3-phosphate + 5-amino-1-(5-phospho-beta-D-ribosyl)imidazole-4-carboxamide + L-glutamate + H(+). The protein operates within amino-acid biosynthesis; L-histidine biosynthesis; L-histidine from 5-phospho-alpha-D-ribose 1-diphosphate: step 5/9. Its function is as follows. IGPS catalyzes the conversion of PRFAR and glutamine to IGP, AICAR and glutamate. The HisF subunit catalyzes the cyclization activity that produces IGP and AICAR from PRFAR using the ammonia provided by the HisH subunit. The protein is Imidazole glycerol phosphate synthase subunit HisF of Aeromonas hydrophila subsp. hydrophila (strain ATCC 7966 / DSM 30187 / BCRC 13018 / CCUG 14551 / JCM 1027 / KCTC 2358 / NCIMB 9240 / NCTC 8049).